A 377-amino-acid chain; its full sequence is Phosphatidylserine decarboxylase proenzyme, mitochondrial (377 aa).

The N-terminal 34 residues, 1–34, are a transit peptide targeting the mitochondrion; sequence MMPLFNVLRSARMLPAVSKKVVSPPMMLRSVREL. At 35–61 the chain is on the mitochondrial matrix side; the sequence is TNQSKNVYATKEVIIGASQKKKRSWVK. Residues 62–80 form a helical membrane-spanning segment; it reads WLSVSTLIIGGASYVGYLF. Residues 81–377 lie on the Mitochondrial intermembrane side of the membrane; the sequence is TPDWREIVDS…YGQSLVADGV (297 aa). Catalysis depends on charge relay system; for autoendoproteolytic cleavage activity residues Asp181, His238, and Ser344. Catalysis depends on Ser344, which acts as the Schiff-base intermediate with substrate; via pyruvic acid; for decarboxylase activity. At Ser344 the chain carries Pyruvic acid (Ser); by autocatalysis.

The protein belongs to the phosphatidylserine decarboxylase family. PSD-B subfamily. Eukaryotic type I sub-subfamily. Heterodimer of a large membrane-associated beta subunit and a small pyruvoyl-containing alpha subunit. It depends on pyruvate as a cofactor. Is synthesized initially as an inactive proenzyme. Formation of the active enzyme involves a self-maturation process in which the active site pyruvoyl group is generated from an internal serine residue via an autocatalytic post-translational modification. Two non-identical subunits are generated from the proenzyme in this reaction, and the pyruvate is formed at the N-terminus of the alpha chain, which is derived from the carboxyl end of the proenzyme. The autoendoproteolytic cleavage occurs by a canonical serine protease mechanism, in which the side chain hydroxyl group of the serine supplies its oxygen atom to form the C-terminus of the beta chain, while the remainder of the serine residue undergoes an oxidative deamination to produce ammonia and the pyruvoyl prosthetic group on the alpha chain. During this reaction, the Ser that is part of the protease active site of the proenzyme becomes the pyruvoyl prosthetic group, which constitutes an essential element of the active site of the mature decarboxylase.

The protein localises to the mitochondrion inner membrane. It catalyses the reaction a 1,2-diacyl-sn-glycero-3-phospho-L-serine + H(+) = a 1,2-diacyl-sn-glycero-3-phosphoethanolamine + CO2. It participates in phospholipid metabolism; phosphatidylethanolamine biosynthesis; phosphatidylethanolamine from CDP-diacylglycerol: step 2/2. In terms of biological role, catalyzes the formation of phosphatidylethanolamine (PtdEtn) from phosphatidylserine (PtdSer). Plays a central role in phospholipid metabolism and in the interorganelle trafficking of phosphatidylserine. The sequence is that of Phosphatidylserine decarboxylase proenzyme, mitochondrial from Caenorhabditis elegans.